The following is a 198-amino-acid chain: Pyridoxal 5'-phosphate synthase subunit PdxT (198 aa).

Position 49–51 (49–51) interacts with L-glutamine; sequence GES. C81 (nucleophile) is an active-site residue. Residues R113 and 141 to 142 each bind L-glutamine; that span reads IR. Residues H177 and E179 each act as charge relay system in the active site.

Belongs to the glutaminase PdxT/SNO family. In terms of assembly, in the presence of PdxS, forms a dodecamer of heterodimers. Only shows activity in the heterodimer.

The catalysed reaction is aldehydo-D-ribose 5-phosphate + D-glyceraldehyde 3-phosphate + L-glutamine = pyridoxal 5'-phosphate + L-glutamate + phosphate + 3 H2O + H(+). It carries out the reaction L-glutamine + H2O = L-glutamate + NH4(+). Its pathway is cofactor biosynthesis; pyridoxal 5'-phosphate biosynthesis. Functionally, catalyzes the hydrolysis of glutamine to glutamate and ammonia as part of the biosynthesis of pyridoxal 5'-phosphate. The resulting ammonia molecule is channeled to the active site of PdxS. The sequence is that of Pyridoxal 5'-phosphate synthase subunit PdxT from Mycobacterium tuberculosis (strain ATCC 25177 / H37Ra).